A 383-amino-acid chain; its full sequence is Lipid-A-disaccharide synthase (383 aa).

This sequence belongs to the LpxB family.

It carries out the reaction a lipid X + a UDP-2-N,3-O-bis[(3R)-3-hydroxyacyl]-alpha-D-glucosamine = a lipid A disaccharide + UDP + H(+). It participates in bacterial outer membrane biogenesis; LPS lipid A biosynthesis. In terms of biological role, condensation of UDP-2,3-diacylglucosamine and 2,3-diacylglucosamine-1-phosphate to form lipid A disaccharide, a precursor of lipid A, a phosphorylated glycolipid that anchors the lipopolysaccharide to the outer membrane of the cell. This is Lipid-A-disaccharide synthase from Anaeromyxobacter dehalogenans (strain 2CP-1 / ATCC BAA-258).